The chain runs to 216 residues: Peptide deformylase 1 (216 aa).

The Fe cation site is built by cysteine 135 and histidine 177. Residue glutamate 178 is part of the active site. Histidine 181 is a Fe cation binding site.

This sequence belongs to the polypeptide deformylase family. Requires Fe(2+) as cofactor.

It carries out the reaction N-terminal N-formyl-L-methionyl-[peptide] + H2O = N-terminal L-methionyl-[peptide] + formate. In terms of biological role, removes the formyl group from the N-terminal Met of newly synthesized proteins. Requires at least a dipeptide for an efficient rate of reaction. N-terminal L-methionine is a prerequisite for activity but the enzyme has broad specificity at other positions. The polypeptide is Peptide deformylase 1 (Streptomyces avermitilis (strain ATCC 31267 / DSM 46492 / JCM 5070 / NBRC 14893 / NCIMB 12804 / NRRL 8165 / MA-4680)).